The following is a 507-amino-acid chain: ATP synthase subunit alpha, chloroplastic (507 aa).

170–177 contributes to the ATP binding site; that stretch reads GDRQTGKT. Residue Thr257 is modified to Phosphothreonine.

Belongs to the ATPase alpha/beta chains family. In terms of assembly, F-type ATPases have 2 components, CF(1) - the catalytic core - and CF(0) - the membrane proton channel. CF(1) has five subunits: alpha(3), beta(3), gamma(1), delta(1), epsilon(1). CF(0) has four main subunits: a, b, b' and c.

It localises to the plastid. The protein localises to the chloroplast thylakoid membrane. It carries out the reaction ATP + H2O + 4 H(+)(in) = ADP + phosphate + 5 H(+)(out). Its function is as follows. Produces ATP from ADP in the presence of a proton gradient across the membrane. The alpha chain is a regulatory subunit. The protein is ATP synthase subunit alpha, chloroplastic of Aethionema cordifolium (Lebanon stonecress).